The primary structure comprises 303 residues: 2-dehydropantoate 2-reductase (303 aa).

NADP(+) contacts are provided by residues 7–12 (GAGSLG), R35, N103, A129, and R131. A substrate-binding site is contributed by N103. K182 serves as the catalytic Proton donor. Substrate is bound by residues N186, N190, N200, and S250. NADP(+) is bound at residue E262.

This sequence belongs to the ketopantoate reductase family.

The protein localises to the cytoplasm. The enzyme catalyses (R)-pantoate + NADP(+) = 2-dehydropantoate + NADPH + H(+). It participates in cofactor biosynthesis; (R)-pantothenate biosynthesis; (R)-pantoate from 3-methyl-2-oxobutanoate: step 2/2. Functionally, catalyzes the NADPH-dependent reduction of ketopantoate into pantoic acid. This Pseudomonas aeruginosa (strain ATCC 15692 / DSM 22644 / CIP 104116 / JCM 14847 / LMG 12228 / 1C / PRS 101 / PAO1) protein is 2-dehydropantoate 2-reductase (panE).